The primary structure comprises 462 residues: MILGPDGILNRDTRGDWWRLRTLILLRWMAVAGQLAAIVVTDWYLGVRLPMGLCFMAVGASVIANVIATFVFPQNRRLTEFQALMILLFDLTQLSFLLFLTGGLTNPFALLILAPVTISGVALDVRTTVILGAIAIGLLTFTAYFHLPLILADGSSLSVPRMFEFGFWLAIVIGILFLGLYSRRVAIEIRSMSDALLATQMALDREQKLTDLGGVVAAAAHELGTPLATIKLVSSELAEELSEQPALRDDADVIREQADRCRDILRSMGRAGKDDLQMRQGPLGEVLREAAEPHVGRGKRVEFDLYPSRGGDERQPVILRRPEVIHGVRNLIQNAVDFARSTVWIDGEWTGDRIAIRIVDDGEGYPPAIIGRIGDPFVRQRRAEESQSRRPGYEGMGLGLFIAKTLLERSGAELSFANAADPFLRSHERPERCGAIVEVIWPVDRLVVVRNAPLGENVLIQT.

Residues 1–25 are Cytoplasmic-facing; sequence MILGPDGILNRDTRGDWWRLRTLIL. A helical membrane pass occupies residues 26–45; it reads LRWMAVAGQLAAIVVTDWYL. At 46 to 51 the chain is on the extracellular side; it reads GVRLPM. Residues 52–70 form a helical membrane-spanning segment; that stretch reads GLCFMAVGASVIANVIATF. Residues 71-78 are Cytoplasmic-facing; it reads VFPQNRRL. The helical transmembrane segment at 79 to 96 threads the bilayer; the sequence is TEFQALMILLFDLTQLSF. Over 97–103 the chain is Extracellular; sequence LLFLTGG. A helical transmembrane segment spans residues 104 to 123; it reads LTNPFALLILAPVTISGVAL. Residues 124–129 lie on the Cytoplasmic side of the membrane; sequence DVRTTV. Residues 130-149 form a helical membrane-spanning segment; that stretch reads ILGAIAIGLLTFTAYFHLPL. Residues 150–164 are Extracellular-facing; it reads ILADGSSLSVPRMFE. The helical transmembrane segment at 165-182 threads the bilayer; sequence FGFWLAIVIGILFLGLYS. Residues 183–462 are Cytoplasmic-facing; that stretch reads RRVAIEIRSM…PLGENVLIQT (280 aa). The region spanning 218–445 is the Histidine kinase domain; it reads AAAHELGTPL…IVEVIWPVDR (228 aa). At His-221 the chain carries Phosphohistidine; by autocatalysis.

It localises to the cell inner membrane. The catalysed reaction is ATP + protein L-histidine = ADP + protein N-phospho-L-histidine.. Functionally, member of the two-component regulatory system RegB/RegA. Involved in the positive regulation of photosynthesis gene expression in response to anaerobiosis. Also involved in positive regulation of the cbbI and cbbII Calvin cycle CO2 fixation operons, as well as in regulation of expression of genes involved in alternative CO2 fixation pathways. Phosphorylates RegA/PrrA. This chain is Sensor histidine kinase RegB (regB), found in Cereibacter sphaeroides (Rhodobacter sphaeroides).